Reading from the N-terminus, the 526-residue chain is Phosphoenolpyruvate carboxylase (526 aa).

It belongs to the PEPCase type 2 family. Homotetramer. The cofactor is Mg(2+).

It catalyses the reaction oxaloacetate + phosphate = phosphoenolpyruvate + hydrogencarbonate. Catalyzes the irreversible beta-carboxylation of phosphoenolpyruvate (PEP) to form oxaloacetate (OAA), a four-carbon dicarboxylic acid source for the tricarboxylic acid cycle. The chain is Phosphoenolpyruvate carboxylase from Methanosarcina acetivorans (strain ATCC 35395 / DSM 2834 / JCM 12185 / C2A).